A 216-amino-acid chain; its full sequence is Vascular endothelial growth factor A (216 aa).

The N-terminal stretch at 1–26 (MNFLLTWIHWGLAALLYLQSAELSKA) is a signal peptide. 3 disulfides stabilise this stretch: C52-C94, C83-C128, and C87-C130. N101 carries an N-linked (GlcNAc...) asparagine glycan. Basic and acidic residues predominate over residues 132–141 (PKKDVKNKQE). Positions 132 to 167 (PKKDVKNKQEKKSKRGKGKGQKRKRKKGRYKPPSFH) are disordered. Positions 142–161 (KKSKRGKGKGQKRKRKKGRY) are enriched in basic residues.

Belongs to the PDGF/VEGF growth factor family. In terms of assembly, homodimer; disulfide-linked. Also found as heterodimer with PGF.

Growth factor active in angiogenesis, vasculogenesis and endothelial cell growth. Induces endothelial cell proliferation, promotes cell migration, inhibits apoptosis and induces permeabilization of blood vessels. Binds to the FLT1/VEGFR1 and KDR/VEGFR2 receptors, heparan sulfate and heparin. The protein is Vascular endothelial growth factor A (VEGFA) of Gallus gallus (Chicken).